Consider the following 228-residue polypeptide: uncharacterized protein (228 aa).

To E.coli YbfG.

This is an uncharacterized protein from Haemophilus influenzae (strain ATCC 51907 / DSM 11121 / KW20 / Rd).